We begin with the raw amino-acid sequence, 162 residues long: Large ribosomal subunit protein bL9 (162 aa).

It belongs to the bacterial ribosomal protein bL9 family.

In terms of biological role, binds to the 23S rRNA. In Chlorobaculum parvum (strain DSM 263 / NCIMB 8327) (Chlorobium vibrioforme subsp. thiosulfatophilum), this protein is Large ribosomal subunit protein bL9.